The sequence spans 178 residues: Large ribosomal subunit protein uL6 (178 aa).

The span at 155 to 169 (PYKGKGIKYDNEQIR) shows a compositional bias: basic and acidic residues. Residues 155–178 (PYKGKGIKYDNEQIRRKAGKSGGK) form a disordered region.

This sequence belongs to the universal ribosomal protein uL6 family. As to quaternary structure, part of the 50S ribosomal subunit.

Functionally, this protein binds to the 23S rRNA, and is important in its secondary structure. It is located near the subunit interface in the base of the L7/L12 stalk, and near the tRNA binding site of the peptidyltransferase center. In Nitratidesulfovibrio vulgaris (strain DSM 19637 / Miyazaki F) (Desulfovibrio vulgaris), this protein is Large ribosomal subunit protein uL6.